Consider the following 809-residue polypeptide: MTLTRREFIKHSGIAAGALVVTSAAPLPAWAEEKGGKILTAGRWGAMNVEVKDGKIVSSTGALAKTIPNSLQSTAADQVHTTARIQHPMVRKSYLDNPLQPAKGRGEDTYVQVSWEQALKLIHEQHERIRKANGPSAIFAGSYGWRSSGVLHKAQTLLQRYMNLAGGYSGHSGDYSTGAAQVIMPHVVGSVEVYEQQTSWPLILENSQVVVLWGMNPLNTLKIAWSSTDEQGLEYFHQLKKSGKPVIAIDPIRSETIEFFGYNATWIAPNMGTDVALMLGIAHTLMTQGKHDKVFLEKYTTGYPQFEEYLTGKSDNTPKSAAWTAEITGVPEAQIVKLAELMAANRTMLMAGWGIQRQQYGEQKHWMLVTLAAMLGQIGTPGGGFGFSYHYSNGGNPTRVGGVLPEMSAAIAGQASEAADDGGMTAIPVARIVDALENPGGKYQHNGKEQTYPNIKMIWWAGGGNFTHHQDTNRLIKAWQKPEMIVVSECYWTAAAKHADIVLPITTSFERNDLTMTGDYSNQHIVPMKQAVAPQFEARNDFDVFAELAELLKPGGKEIYTEGKDEMAWLKFFYDAAQKGARAQRVTMPMFNAFWQQNKLIEMRRSEKNEQYVRYGDFRADPVKNALGTPSGKIEIYSKTLEKFGYKDCPAHPTWLAPDEWKGTADEKQLQLLTAHPAHRLHSQLNYAQLRKKYAVADREPITIHTEDAARFGIANGDLVRVWNKRGQILTGAVVTDGIKKGVVCVHEGAWPDLENGLCKNGSANVLTADIPSSQLANACAGNSALVYIEKYTGNAPKLTAFDQPAVQA.

A signal peptide (tat-type signal) is located at residues 1 to 31 (MTLTRREFIKHSGIAAGALVVTSAAPLPAWA). S176 provides a ligand contact to Mo-bis(molybdopterin guanine dinucleotide).

The protein belongs to the prokaryotic molybdopterin-containing oxidoreductase family. Requires Mo-bis(molybdopterin guanine dinucleotide) as cofactor. Post-translationally, predicted to be exported by the Tat system. The position of the signal peptide cleavage has not been experimentally proven.

Its subcellular location is the periplasm. It catalyses the reaction trimethylamine + 2 Fe(III)-[cytochrome c] + H2O = trimethylamine N-oxide + 2 Fe(II)-[cytochrome c] + 3 H(+). Reduces trimethylamine-N-oxide (TMAO) into trimethylamine; an anaerobic reaction coupled to energy-yielding reactions. Can also reduce other N- and S-oxide compounds such as 4-methylmorpholine-N-oxide and biotin sulfoxide (BSO), but with a lower catalytic efficiency. The sequence is that of Trimethylamine-N-oxide reductase 2 (torZ) from Escherichia coli O157:H7.